The chain runs to 446 residues: Enolase 1 (446 aa).

Substrate contacts are provided by histidine 164 and glutamate 173. Residue glutamate 216 is the Proton donor of the active site. Aspartate 251, glutamate 302, and aspartate 329 together coordinate Mg(2+). Residues glutamate 302 and aspartate 329 each contribute to the substrate site. Lysine 354 acts as the Proton acceptor in catalysis. Substrate is bound by residues 381–384 (SHRS) and lysine 405.

The protein belongs to the enolase family. In terms of assembly, homodimer. It depends on Mg(2+) as a cofactor.

It localises to the cytoplasm. It catalyses the reaction (2R)-2-phosphoglycerate = phosphoenolpyruvate + H2O. It functions in the pathway carbohydrate degradation; glycolysis; pyruvate from D-glyceraldehyde 3-phosphate: step 4/5. In Zea mays (Maize), this protein is Enolase 1 (ENO1).